Consider the following 280-residue polypeptide: MEVIKSIDKMKQISFENILKGKKIGFVPTMGYLHEGHLSLVRAAREENDILVVSIFVNPTQFGPNEDFESYPRDLKRDLSLLEKENVDYVFVPEVSDMYPNDYSTFVEEVVLSKFLCGASRPGHFRGVCTVVTKFFNIVKPTRAYFGQKDAQQFRVLRRMVRDLNLDVELREMPIVRELDGLAMSSRNTYLNDVERNEATRLYKSLLKAKELIEKGEKDVLKIKDEMKKILDHPLLKIDYIEFVDEETLRPVEKIEGKVIVAIAVFVGKARLIDNIIVGG.

30 to 37 (MGYLHEGH) is an ATP binding site. The active-site Proton donor is His37. Gln61 is a binding site for (R)-pantoate. A beta-alanine-binding site is contributed by Gln61. 147–150 (GQKD) contacts ATP. Residue Gln153 coordinates (R)-pantoate. Residues Val176 and 184–187 (MSSR) contribute to the ATP site.

The protein belongs to the pantothenate synthetase family. In terms of assembly, homodimer.

The protein resides in the cytoplasm. It carries out the reaction (R)-pantoate + beta-alanine + ATP = (R)-pantothenate + AMP + diphosphate + H(+). It functions in the pathway cofactor biosynthesis; (R)-pantothenate biosynthesis; (R)-pantothenate from (R)-pantoate and beta-alanine: step 1/1. In terms of biological role, catalyzes the condensation of pantoate with beta-alanine in an ATP-dependent reaction via a pantoyl-adenylate intermediate. The sequence is that of Pantothenate synthetase from Thermosipho melanesiensis (strain DSM 12029 / CIP 104789 / BI429).